The primary structure comprises 364 residues: Alpha-2-HS-glycoprotein (364 aa).

Residues 1–15 constitute a signal peptide (or 17); that stretch reads MKSFLLLFCLAQLCS. A Cystatin fetuin-A-type 1 domain is found at 27–133; it reads YKEPACDDPD…QFSVLFTKCD (107 aa). 6 disulfide bridges follow: cysteine 32/cysteine 355, cysteine 89/cysteine 100, cysteine 114/cysteine 132, cysteine 146/cysteine 149, cysteine 208/cysteine 219, and cysteine 230/cysteine 248. N-linked (GlcNAc...) asparagine glycosylation is present at asparagine 99. Residues serine 134, serine 135, and serine 138 each carry the phosphoserine modification. Positions 144 to 256 constitute a Cystatin fetuin-A-type 2 domain; that stretch reads KLCPDCPLLA…TCTLFQTQPV (113 aa). Asparagine 156 and asparagine 176 each carry an N-linked (GlcNAc...) asparagine glycan. Residue serine 301 is glycosylated (O-linked (GalNAc...) serine). Residue threonine 319 is modified to Phosphothreonine. Phosphoserine is present on residues serine 321, serine 325, serine 328, and serine 330. Residue threonine 339 is glycosylated (O-linked (GalNAc...) threonine).

This sequence belongs to the fetuin family. In terms of processing, phosphorylated by FAM20C in the extracellular medium.

Its subcellular location is the secreted. The sequence is that of Alpha-2-HS-glycoprotein (AHSG) from Ovis aries (Sheep).